The primary structure comprises 418 residues: CinA-like protein (418 aa).

The protein belongs to the CinA family.

In Leptospira interrogans serogroup Icterohaemorrhagiae serovar copenhageni (strain Fiocruz L1-130), this protein is CinA-like protein.